A 238-amino-acid chain; its full sequence is ATP-dependent dethiobiotin synthetase BioD (238 aa).

13–18 (EIGKTV) contributes to the ATP binding site. Threonine 17 is a Mg(2+) binding site. Lysine 38 is a catalytic residue. Threonine 42 contributes to the substrate binding site. Residues arginine 59 and glutamate 111 each contribute to the Mg(2+) site. ATP contacts are provided by residues 111–114 (EGAG), 175–176 (NQ), and 204–206 (PLL).

The protein belongs to the dethiobiotin synthetase family. In terms of assembly, homodimer. Mg(2+) is required as a cofactor.

The protein localises to the cytoplasm. The catalysed reaction is (7R,8S)-7,8-diammoniononanoate + CO2 + ATP = (4R,5S)-dethiobiotin + ADP + phosphate + 3 H(+). It functions in the pathway cofactor biosynthesis; biotin biosynthesis; biotin from 7,8-diaminononanoate: step 1/2. Functionally, catalyzes a mechanistically unusual reaction, the ATP-dependent insertion of CO2 between the N7 and N8 nitrogen atoms of 7,8-diaminopelargonic acid (DAPA, also called 7,8-diammoniononanoate) to form a ureido ring. The sequence is that of ATP-dependent dethiobiotin synthetase BioD from Geobacillus kaustophilus (strain HTA426).